Here is an 87-residue protein sequence, read N- to C-terminus: Phosphoribosyl-ATP pyrophosphatase (87 aa).

It belongs to the PRA-PH family.

The protein resides in the cytoplasm. It catalyses the reaction 1-(5-phospho-beta-D-ribosyl)-ATP + H2O = 1-(5-phospho-beta-D-ribosyl)-5'-AMP + diphosphate + H(+). Its pathway is amino-acid biosynthesis; L-histidine biosynthesis; L-histidine from 5-phospho-alpha-D-ribose 1-diphosphate: step 2/9. In Corynebacterium diphtheriae (strain ATCC 700971 / NCTC 13129 / Biotype gravis), this protein is Phosphoribosyl-ATP pyrophosphatase.